The chain runs to 265 residues: MQPDLHCRTLAAHTLKHFRALSPLTHCMTNDVVQTFTANTLLALGASPAMVIDPAEARPFAAIANALLVNVGTLTASRADAMRAAVESAYDAKTPWTLDPVAVGALEFRRRFCLDLLSLRPAAIRGNASEILALAGMALGGRGVDTTEAALAALPAAQALARQIDCIVVVTGEIDYVTNGQRTLSIPGGDPLMTRIVGTGCALSAVVAASCALPGAALDNVASACCWMKLAGQAAAERSEGPGSFIPAFLDALYHLDVEAANATN.

Met-50 lines the substrate pocket. 2 residues coordinate ATP: Arg-125 and Thr-171. Gly-198 serves as a coordination point for substrate.

It belongs to the Thz kinase family. Mg(2+) is required as a cofactor.

It carries out the reaction 5-(2-hydroxyethyl)-4-methylthiazole + ATP = 4-methyl-5-(2-phosphooxyethyl)-thiazole + ADP + H(+). The protein operates within cofactor biosynthesis; thiamine diphosphate biosynthesis; 4-methyl-5-(2-phosphoethyl)-thiazole from 5-(2-hydroxyethyl)-4-methylthiazole: step 1/1. Functionally, catalyzes the phosphorylation of the hydroxyl group of 4-methyl-5-beta-hydroxyethylthiazole (THZ). This is Hydroxyethylthiazole kinase from Salmonella arizonae (strain ATCC BAA-731 / CDC346-86 / RSK2980).